The primary structure comprises 283 residues: Pantothenate synthetase (283 aa).

Residue 30–37 coordinates ATP; that stretch reads MGYYHAGH. H37 (proton donor) is an active-site residue. Residue Q61 participates in (R)-pantoate binding. A beta-alanine-binding site is contributed by Q61. 147–150 is an ATP binding site; the sequence is GQKD. Residue Q153 participates in (R)-pantoate binding. ATP-binding positions include V176 and 184 to 187; that span reads MSSR.

This sequence belongs to the pantothenate synthetase family. As to quaternary structure, homodimer.

It localises to the cytoplasm. The catalysed reaction is (R)-pantoate + beta-alanine + ATP = (R)-pantothenate + AMP + diphosphate + H(+). It functions in the pathway cofactor biosynthesis; (R)-pantothenate biosynthesis; (R)-pantothenate from (R)-pantoate and beta-alanine: step 1/1. Functionally, catalyzes the condensation of pantoate with beta-alanine in an ATP-dependent reaction via a pantoyl-adenylate intermediate. The chain is Pantothenate synthetase from Nitratidesulfovibrio vulgaris (strain ATCC 29579 / DSM 644 / CCUG 34227 / NCIMB 8303 / VKM B-1760 / Hildenborough) (Desulfovibrio vulgaris).